A 210-amino-acid polypeptide reads, in one-letter code: Urease accessory protein UreG (210 aa).

15 to 22 (GPVGSGKT) serves as a coordination point for GTP.

The protein belongs to the SIMIBI class G3E GTPase family. UreG subfamily. Homodimer. UreD, UreF and UreG form a complex that acts as a GTP-hydrolysis-dependent molecular chaperone, activating the urease apoprotein by helping to assemble the nickel containing metallocenter of UreC. The UreE protein probably delivers the nickel.

It is found in the cytoplasm. In terms of biological role, facilitates the functional incorporation of the urease nickel metallocenter. This process requires GTP hydrolysis, probably effectuated by UreG. The chain is Urease accessory protein UreG from Ralstonia nicotianae (strain ATCC BAA-1114 / GMI1000) (Ralstonia solanacearum).